The chain runs to 263 residues: 3-oxo-5-alpha-steroid 4-dehydrogenase 1 (263 aa).

The next 5 helical transmembrane spans lie at 16–33 (MLAA…AVLA), 90–110 (ILLA…PFLM), 115–135 (PMPL…GYLQ), 155–175 (FLIG…SDHI), and 213–233 (YALA…FCFL).

Belongs to the steroid 5-alpha reductase family.

The protein resides in the microsome membrane. Its subcellular location is the endoplasmic reticulum membrane. It carries out the reaction a 3-oxo-5alpha-steroid + NADP(+) = a 3-oxo-Delta(4)-steroid + NADPH + H(+). The catalysed reaction is 5alpha-pregnane-3,20-dione + NADP(+) = progesterone + NADPH + H(+). The enzyme catalyses 17beta-hydroxy-5alpha-androstan-3-one + NADP(+) = testosterone + NADPH + H(+). It catalyses the reaction androst-4-ene-3,17-dione + NADPH + H(+) = 5alpha-androstan-3,17-dione + NADP(+). Functionally, converts testosterone into 5-alpha-dihydrotestosterone and progesterone or corticosterone into their corresponding 5-alpha-3-oxosteroids. It plays a central role in sexual differentiation and androgen physiology. This is 3-oxo-5-alpha-steroid 4-dehydrogenase 1 (SRD5A1) from Macaca fascicularis (Crab-eating macaque).